We begin with the raw amino-acid sequence, 374 residues long: Alanine racemase (374 aa).

Lysine 34 functions as the Proton acceptor; specific for D-alanine in the catalytic mechanism. Position 34 is an N6-(pyridoxal phosphate)lysine (lysine 34). Arginine 147 contacts substrate. Residue tyrosine 271 is the Proton acceptor; specific for L-alanine of the active site. Methionine 319 contacts substrate.

The protein belongs to the alanine racemase family. Pyridoxal 5'-phosphate is required as a cofactor.

The catalysed reaction is L-alanine = D-alanine. The protein operates within amino-acid biosynthesis; D-alanine biosynthesis; D-alanine from L-alanine: step 1/1. In terms of biological role, catalyzes the interconversion of L-alanine and D-alanine. May also act on other amino acids. The polypeptide is Alanine racemase (alr) (Actinobacillus pleuropneumoniae serotype 5b (strain L20)).